The sequence spans 564 residues: Potassium-transporting ATPase potassium-binding subunit (564 aa).

Helical transmembrane passes span 4–24 (YDYL…PWLG), 67–87 (TLAL…VLLL), 135–155 (IGLT…LVAL), 179–199 (LYGL…QGVP), 258–278 (FEVA…GHYV), 286–306 (AIIA…LWSE), 382–402 (AGLY…GLMI), 420–440 (LLVA…AIAA), 487–507 (VMIG…VLAL), and 534–554 (LLLL…LALG).

It belongs to the KdpA family. As to quaternary structure, the system is composed of three essential subunits: KdpA, KdpB and KdpC.

The protein resides in the cell inner membrane. Part of the high-affinity ATP-driven potassium transport (or Kdp) system, which catalyzes the hydrolysis of ATP coupled with the electrogenic transport of potassium into the cytoplasm. This subunit binds the periplasmic potassium ions and delivers the ions to the membrane domain of KdpB through an intramembrane tunnel. This Pseudomonas entomophila (strain L48) protein is Potassium-transporting ATPase potassium-binding subunit.